A 268-amino-acid chain; its full sequence is Inositol monophosphatase 3 (268 aa).

The Mg(2+) site is built by glutamate 71, aspartate 91, leucine 93, and aspartate 94. Glutamate 71 contributes to the substrate binding site. Substrate is bound by residues 93–96 (LDGT), 194–196 (GSC), glutamate 213, and aspartate 221. A Mg(2+)-binding site is contributed by aspartate 221.

This sequence belongs to the inositol monophosphatase superfamily. Mg(2+) serves as cofactor. As to expression, expressed in the shoot apex, roots, stems, leaves, flowers and young and mature green fruits.

It catalyses the reaction a myo-inositol phosphate + H2O = myo-inositol + phosphate. It participates in polyol metabolism; myo-inositol biosynthesis; myo-inositol from D-glucose 6-phosphate: step 2/2. Its function is as follows. Responsible for the provision of inositol required for synthesis of phosphatidylinositol and polyphosphoinositides. In Solanum lycopersicum (Tomato), this protein is Inositol monophosphatase 3 (IMP3).